We begin with the raw amino-acid sequence, 206 residues long: Urease accessory protein UreG (206 aa).

15–22 lines the GTP pocket; the sequence is GPVGSGKT.

Belongs to the SIMIBI class G3E GTPase family. UreG subfamily. In terms of assembly, homodimer. UreD, UreF and UreG form a complex that acts as a GTP-hydrolysis-dependent molecular chaperone, activating the urease apoprotein by helping to assemble the nickel containing metallocenter of UreC. The UreE protein probably delivers the nickel.

It localises to the cytoplasm. Its function is as follows. Facilitates the functional incorporation of the urease nickel metallocenter. This process requires GTP hydrolysis, probably effectuated by UreG. The polypeptide is Urease accessory protein UreG (Ralstonia pickettii (strain 12J)).